The following is a 241-amino-acid chain: 3-dehydroquinate dehydratase (241 aa).

3-dehydroquinate-binding positions include 35–37 and R70; that span reads ELR. H132 (proton donor/acceptor) is an active-site residue. Residue K159 is the Schiff-base intermediate with substrate of the active site. 3-dehydroquinate-binding residues include R201 and Q224.

It belongs to the type-I 3-dehydroquinase family. As to quaternary structure, homodimer.

The enzyme catalyses 3-dehydroquinate = 3-dehydroshikimate + H2O. The protein operates within metabolic intermediate biosynthesis; chorismate biosynthesis; chorismate from D-erythrose 4-phosphate and phosphoenolpyruvate: step 3/7. Functionally, involved in the third step of the chorismate pathway, which leads to the biosynthesis of aromatic amino acids. Catalyzes the cis-dehydration of 3-dehydroquinate (DHQ) and introduces the first double bond of the aromatic ring to yield 3-dehydroshikimate. This chain is 3-dehydroquinate dehydratase, found in Staphylococcus carnosus (strain TM300).